Reading from the N-terminus, the 515-residue chain is MALMILPLIGSVSVSETLVAMITVCMIYMLMKFLHPDVPEAPPAPGPQALPIIGNVWSWENGLPEPHGHGQRYGDILQIQIGMRSVVVLSGHETVRQALIKQGHDLRPPDLYSFQFINDGKSLAFSTDQAGVWSPPKAGHECPALLFHARGHHAAVLLHVGGACLQGGRLPRQAAVQRHGTDASFDPFRHIVVSVANVICGMCFGRRYGHEDQELLSLVNLTDEFGKVVGSGNLADFIPLLRFLPNATMKRFMAINERFMTFVQKIVTEHYNTYDKDNIRDITDSLIDHCEDRKLDENSNIQMSDEKIVGIVNDLFGAGFDTVSTALSWSVMYLVAHPEIQERLHQEIKDKVGLSRSPVLTDRHNLPILEAFIFEIFRHSSFLPFTIPHCATKDTSLDGYFIPKDTCVFINQWQINHDPELWKEPSTFNPDRFLSADASELNKLAGEKVMLFGMGKRRCIGEMVARNEVFLFLAILVQRLTFHAVPGEPLDMTPEYGLTMKHKRCHLRATVRTTE.

Phe225 lines the substrate pocket. A heme-binding site is contributed by Cys459.

This sequence belongs to the cytochrome P450 family. The cofactor is heme.

It is found in the endoplasmic reticulum membrane. The protein localises to the microsome membrane. It carries out the reaction an organic molecule + reduced [NADPH--hemoprotein reductase] + O2 = an alcohol + oxidized [NADPH--hemoprotein reductase] + H2O + H(+). Functionally, cytochromes P450 are a group of heme-thiolate monooxygenases. They oxidize a variety of structurally unrelated compounds, including steroids, fatty acids, and xenobiotics. The sequence is that of Cytochrome P450 1A1 (cyp1a1) from Microgadus tomcod (Atlantic tomcod).